Consider the following 322-residue polypeptide: Protein-methionine-sulfoxide reductase catalytic subunit MsrP (322 aa).

Residues 1–59 constitute a signal peptide (tat-type signal); that stretch reads MSLRDALKTPSSEITDEAVYRDRRRLLQLFALTPALSVAGCAEADPPPPPKTVVTPAQA. Mo-molybdopterin contacts are provided by residues Asn-79, 82–83, Cys-137, Thr-172, Asn-220, Arg-225, and 236–238; these read YE and SIK.

This sequence belongs to the MsrP family. As to quaternary structure, heterodimer of a catalytic subunit (MsrP) and a heme-binding subunit (MsrQ). It depends on Mo-molybdopterin as a cofactor. Post-translationally, predicted to be exported by the Tat system. The position of the signal peptide cleavage has not been experimentally proven.

The protein resides in the periplasm. It catalyses the reaction L-methionyl-[protein] + a quinone + H2O = L-methionyl-(S)-S-oxide-[protein] + a quinol. The enzyme catalyses L-methionyl-[protein] + a quinone + H2O = L-methionyl-(R)-S-oxide-[protein] + a quinol. Functionally, part of the MsrPQ system that repairs oxidized periplasmic proteins containing methionine sulfoxide residues (Met-O), using respiratory chain electrons. Thus protects these proteins from oxidative-stress damage caused by reactive species of oxygen and chlorine generated by the host defense mechanisms. MsrPQ is essential for the maintenance of envelope integrity under bleach stress, rescuing a wide series of structurally unrelated periplasmic proteins from methionine oxidation. The catalytic subunit MsrP is non-stereospecific, being able to reduce both (R-) and (S-) diastereoisomers of methionine sulfoxide. The chain is Protein-methionine-sulfoxide reductase catalytic subunit MsrP from Xanthomonas campestris pv. campestris (strain ATCC 33913 / DSM 3586 / NCPPB 528 / LMG 568 / P 25).